Consider the following 453-residue polypeptide: Serine protease HTRA3 (453 aa).

A signal peptide spans 1 to 17 (MQARALLLAALAALALA). The IGFBP N-terminal domain maps to 21–84 (PAAPCPARCD…ECVRGLCRCR (64 aa)). Disulfide bonds link C25–C48, C29–C50, C34–C51, C39–C54, C62–C76, C70–C81, C83–C101, and C90–C126. A Kazal-like domain is found at 64 to 128 (GPLDSPCGES…RQLQKGACPL (65 aa)). Residues 175–340 (GSGFIMSEAG…AIPSDRITRF (166 aa)) form a serine protease region. Active-site charge relay system residues include H191, D227, and S305. The PDZ domain maps to 359–444 (IRMRTITPSL…EVRRGNDDLL (86 aa)).

It belongs to the peptidase S1C family. As to quaternary structure, homotrimer. Interacts with TGFB1; the interaction inhibits TGFB-mediated signaling. Interacts with BMP4; the interaction inhibits BMP4-mediated signaling. Interacts with TGFB2 and GDF5. Interacts with MYH9. Widely expressed, with highest levels in both adult and fetal heart, ovary, uterus placenta, and bladder. In the endometrium, expressed in epithelial glands and the stroma. Also present in leukocytes. Isoform 1 is predominant in heart and skeletal muscle, whereas isoform 2 is predominant in placenta and kidney.

The protein resides in the secreted. Its function is as follows. Serine protease that cleaves beta-casein/CSN2 as well as several extracellular matrix (ECM) proteoglycans such as decorin/DCN, biglycan/BGN and fibronectin/FN1. Inhibits signaling mediated by TGF-beta family proteins possibly indirectly by degradation of these ECM proteoglycans. May act as a tumor suppressor. Negatively regulates, in vitro, trophoblast invasion during placental development and may be involved in the development of the placenta in vivo. May also have a role in ovarian development, granulosa cell differentiation and luteinization. This chain is Serine protease HTRA3 (HTRA3), found in Homo sapiens (Human).